Here is an 812-residue protein sequence, read N- to C-terminus: Probable inorganic carbon transporter subunit DabA (812 aa).

Positions 337, 339, 499, and 514 each coordinate Zn(2+).

Belongs to the inorganic carbon transporter (TC 9.A.2) DabA family. In terms of assembly, forms a complex with DabB. Requires Zn(2+) as cofactor.

The protein resides in the cell inner membrane. Part of an energy-coupled inorganic carbon pump. The chain is Probable inorganic carbon transporter subunit DabA from Xanthomonas oryzae pv. oryzae (strain MAFF 311018).